The chain runs to 370 residues: Glutathione S-transferase omega-like 2 (370 aa).

R15 lines the glutathione pocket. The active-site Nucleophile is the C46. Glutathione contacts are provided by W79, R155, V158, E173, and S174. The GST C-terminal domain occupies P201 to I353.

Belongs to the GST superfamily. Omega family. Homodimer.

Its subcellular location is the cytoplasm. The enzyme catalyses RX + glutathione = an S-substituted glutathione + a halide anion + H(+). It carries out the reaction L-dehydroascorbate + 2 glutathione = glutathione disulfide + L-ascorbate. Functionally, active as '1-Cys' thiol transferase against beta-hydroxyethyl disulfide (HED), as dehydroascorbate reductase and as dimethylarsinic acid reductase, while not active against the standard GST substrate 1-chloro-2,4-dinitrobenzene (CDNB). May be involved in cell wall organization and biogenesis. This chain is Glutathione S-transferase omega-like 2, found in Saccharomyces cerevisiae (strain ATCC 204508 / S288c) (Baker's yeast).